The chain runs to 55 residues: U-reduvitoxin-Pr2a (55 aa).

The first 21 residues, 1 to 21, serve as a signal peptide directing secretion; that stretch reads MMKFLLVLFLITITLITMAYS. Cystine bridges form between cysteine 26–cysteine 41, cysteine 33–cysteine 46, and cysteine 40–cysteine 51.

This sequence belongs to the venom Ptu1-like knottin family. Expressed by the venom gland (posterior main gland) (at protein level).

Its subcellular location is the secreted. In terms of biological role, binds reversibly and blocks P/Q-type voltage-gated calcium channels (Cav). The chain is U-reduvitoxin-Pr2a from Platymeris rhadamanthus (Red spot assassin bug).